The primary structure comprises 717 residues: Polyribonucleotide nucleotidyltransferase (717 aa).

2 residues coordinate Mg(2+): aspartate 496 and aspartate 502. The 60-residue stretch at 563 to 622 (PRLLSFKIDPEMIGLVIGPGGKTIKGITEETGVKIDIDDDGTVTIAAADGEKAKQACNII) folds into the KH domain. The 69-residue stretch at 632-700 (GDVYVGRVTR…SKGRVNLTRL (69 aa)) folds into the S1 motif domain.

Belongs to the polyribonucleotide nucleotidyltransferase family. Requires Mg(2+) as cofactor.

Its subcellular location is the cytoplasm. It catalyses the reaction RNA(n+1) + phosphate = RNA(n) + a ribonucleoside 5'-diphosphate. Its function is as follows. Involved in mRNA degradation. Catalyzes the phosphorolysis of single-stranded polyribonucleotides processively in the 3'- to 5'-direction. The protein is Polyribonucleotide nucleotidyltransferase of Trichodesmium erythraeum (strain IMS101).